Consider the following 118-residue polypeptide: Large ribosomal subunit protein bL17 (118 aa).

It belongs to the bacterial ribosomal protein bL17 family. In terms of assembly, part of the 50S ribosomal subunit. Contacts protein L32.

This chain is Large ribosomal subunit protein bL17, found in Phytoplasma mali (strain AT).